The sequence spans 211 residues: Uridine kinase (211 aa).

An ATP-binding site is contributed by 13–20 (GGTASGKT).

The protein belongs to the uridine kinase family.

The protein localises to the cytoplasm. It catalyses the reaction uridine + ATP = UMP + ADP + H(+). The enzyme catalyses cytidine + ATP = CMP + ADP + H(+). It participates in pyrimidine metabolism; CTP biosynthesis via salvage pathway; CTP from cytidine: step 1/3. Its pathway is pyrimidine metabolism; UMP biosynthesis via salvage pathway; UMP from uridine: step 1/1. The protein is Uridine kinase of Thermus thermophilus (strain ATCC BAA-163 / DSM 7039 / HB27).